A 68-amino-acid polypeptide reads, in one-letter code: Protein P33 (68 aa).

Residues 34 to 63 adopt a coiled-coil conformation; that stretch reads IVNLQGRIAELEARETEMLARVDTLIARLA.

Functionally, assembly protein. The protein is Protein P33 (XXXIII) of Acinetobacter calcoaceticus (Arthrobacter siderocapsulatus).